The primary structure comprises 164 residues: MSQSICSTGLRWLWLVVVVLIIDLGSKYLILQNFALGDTVPLFPSLNLHYARNYGAAFSFLADSGGWQRWFFAGIAIGISVTLVVMMYRSKATQKLNNIAYALIIGGALGNLFDRLWHGFVVDMIDFYVGDWHFATFNLADTAICVGAALIVLEGFLPSKAKKQ.

A run of 3 helical transmembrane segments spans residues 12 to 32 (WLWL…LILQ), 70 to 90 (WFFA…MYRS), and 102 to 122 (ALII…GFVV). Active-site residues include Asp123 and Asp141. Residues 137 to 157 (FNLADTAICVGAALIVLEGFL) traverse the membrane as a helical segment.

This sequence belongs to the peptidase A8 family.

Its subcellular location is the cell inner membrane. The catalysed reaction is Release of signal peptides from bacterial membrane prolipoproteins. Hydrolyzes -Xaa-Yaa-Zaa-|-(S,diacylglyceryl)Cys-, in which Xaa is hydrophobic (preferably Leu), and Yaa (Ala or Ser) and Zaa (Gly or Ala) have small, neutral side chains.. Its pathway is protein modification; lipoprotein biosynthesis (signal peptide cleavage). In terms of biological role, this protein specifically catalyzes the removal of signal peptides from prolipoproteins. The chain is Lipoprotein signal peptidase from Escherichia coli O157:H7.